A 290-amino-acid polypeptide reads, in one-letter code: Sodium/potassium-transporting ATPase subunit beta-2 (290 aa).

Residues 1–39 (MVIQKEKKSCGQVVEEWKEFVWNPRTHQFMGRTGTSWAF) lie on the Cytoplasmic side of the membrane. Residues 40 to 67 (ILLFYLVFYGFLTAMFTLTMWVMLQTVS) traverse the membrane as a helical; Signal-anchor for type II membrane protein segment. The Extracellular segment spans residues 68-290 (DHTPKYQDRL…VAFKLRINKT (223 aa)). 2 N-linked (GlcNAc...) asparagine glycosylation sites follow: asparagine 96 and asparagine 118. A disulfide bridge connects residues cysteine 129 and cysteine 150. Residues asparagine 153 and asparagine 159 are each glycosylated (N-linked (GlcNAc...) asparagine). The cysteines at positions 160 and 177 are disulfide-linked. Residues asparagine 193, asparagine 197, and asparagine 238 are each glycosylated (N-linked (GlcNAc...) asparagine). Residues 193–290 (NQSMNVTCAG…VAFKLRINKT (98 aa)) form an immunoglobulin-like region. Residues cysteine 200 and cysteine 261 are joined by a disulfide bond.

Belongs to the X(+)/potassium ATPases subunit beta family. As to quaternary structure, the sodium/potassium-transporting ATPase is composed of a catalytic alpha subunit, an auxiliary non-catalytic beta subunit and an additional regulatory subunit. Interacts with isoform 2 of BSG.

The protein localises to the cell membrane. This is the non-catalytic component of the active enzyme, which catalyzes the hydrolysis of ATP coupled with the exchange of Na(+) and K(+) ions across the plasma membrane. The exact function of the beta-2 subunit is not known. Functionally, mediates cell adhesion of neurons and astrocytes, and promotes neurite outgrowth. The protein is Sodium/potassium-transporting ATPase subunit beta-2 (ATP1B2) of Homo sapiens (Human).